Reading from the N-terminus, the 101-residue chain is Small ribosomal subunit protein uS14 (101 aa).

The protein belongs to the universal ribosomal protein uS14 family. Part of the 30S ribosomal subunit. Contacts proteins S3 and S10.

Binds 16S rRNA, required for the assembly of 30S particles and may also be responsible for determining the conformation of the 16S rRNA at the A site. The sequence is that of Small ribosomal subunit protein uS14 from Hyphomonas neptunium (strain ATCC 15444).